The chain runs to 369 residues: 4beta-methylsterol monooxygenase (369 aa).

Residues 29-135 (WYVVEIDGRL…VKAQWGLIWL (107 aa)) form the Rieske domain. Positions 70, 72, 89, and 92 each coordinate [2Fe-2S] cluster.

Requires [2Fe-2S] cluster as cofactor.

The catalysed reaction is a 3beta-hydroxy-4,4-dimethylsteroid + 3 NADH + 3 O2 + 2 H(+) = a 3beta-hydroxy-4alpha-methylsteroid-4beta-carboxylate + 3 NAD(+) + 4 H2O. It catalyses the reaction 4,4-dimethyl-5alpha-cholesta-8,24-dien-3beta-ol + 3 NADH + 3 O2 + 2 H(+) = 4beta-carboxy-4alpha-methyl-5alpha-cholesta-8,24-dien-3beta-ol + 3 NAD(+) + 4 H2O. It carries out the reaction a 3beta-hydroxy-4,4-dimethylsteroid + NADH + O2 + H(+) = a 3beta-hydroxy-4beta-hydroxymethyl-4alpha-methylsteroid + NAD(+) + H2O. The enzyme catalyses a 3beta-hydroxy-4beta-hydroxymethyl-4alpha-methylsteroid + NADH + O2 + H(+) = a 3beta-hydroxy-4beta-formyl-4alpha-methylsteroid + NAD(+) + 2 H2O. The catalysed reaction is a 3beta-hydroxy-4beta-formyl-4alpha-methylsteroid + NADH + O2 = a 3beta-hydroxy-4alpha-methylsteroid-4beta-carboxylate + NAD(+) + H2O. It catalyses the reaction 4,4-dimethyl-5alpha-cholesta-8,24-dien-3beta-ol + NADH + O2 + H(+) = 4beta-hydroxymethyl-4alpha-methylzymosterol + NAD(+) + H2O. It carries out the reaction 4beta-hydroxymethyl-4alpha-methylzymosterol + NADH + O2 + H(+) = 4beta-formylmethyl-4alpha-methyl-5alpha-cholesta-8,24-dien-3beta-ol + NAD(+) + 2 H2O. The enzyme catalyses 4beta-formylmethyl-4alpha-methyl-5alpha-cholesta-8,24-dien-3beta-ol + NADH + O2 = 4beta-carboxy-4alpha-methyl-5alpha-cholesta-8,24-dien-3beta-ol + NAD(+) + H2O. It functions in the pathway steroid biosynthesis; sterol biosynthesis. Its function is as follows. Participates in the biosynthesis of bacterial sterols. Together with SdmB, removes one methyl group from the C-4 position of 4,4-dimethylated steroid molecules. SdmA oxidizes the sterol 4beta-methyl group into first a hydroxyl, then an aldehyde and finally a carboxylic acid group. This chain is 4beta-methylsterol monooxygenase, found in Methylococcus capsulatus (strain ATCC 33009 / NCIMB 11132 / Bath).